The following is a 363-amino-acid chain: Aspartate carbamoyltransferase, chloroplastic (363 aa).

The disordered stretch occupies residues 1-21; sequence MAAARATLPLPRVPAPSPRPQ. The N-terminal 36 residues, 1-36, are a transit peptide targeting the chloroplast; the sequence is MAAARATLPLPRVPAPSPRPQLRPFPSLPARRGAVA. The span at 11-21 shows a compositional bias: pro residues; sequence PRVPAPSPRPQ. 2 residues coordinate carbamoyl phosphate: Arg109 and Thr110. The UMP site is built by Arg109 and Thr110. Lys139 lines the L-aspartate pocket. Residues Arg160, His188, and Gln191 each contribute to the carbamoyl phosphate site. UMP is bound by residues Arg160 and His188. Residues Arg221 and Arg283 each contribute to the UMP site. L-aspartate contacts are provided by Arg221 and Arg283. Leu323 and Pro324 together coordinate carbamoyl phosphate.

Belongs to the aspartate/ornithine carbamoyltransferase superfamily. ATCase family. In terms of assembly, homotrimer.

It localises to the plastid. The protein resides in the chloroplast. The enzyme catalyses carbamoyl phosphate + L-aspartate = N-carbamoyl-L-aspartate + phosphate + H(+). It functions in the pathway pyrimidine metabolism; UMP biosynthesis via de novo pathway; (S)-dihydroorotate from bicarbonate: step 2/3. With respect to regulation, feedback inhibited by UMP. In terms of biological role, catalyzes the condensation of carbamoyl phosphate and aspartate to form carbamoyl aspartate and inorganic phosphate, the committed step in the de novo pyrimidine nucleotide biosynthesis pathway. The protein is Aspartate carbamoyltransferase, chloroplastic (PYRB) of Oryza sativa subsp. japonica (Rice).